A 137-amino-acid polypeptide reads, in one-letter code: Nucleoside diphosphate kinase (137 aa).

ATP is bound by residues lysine 9, phenylalanine 57, arginine 85, threonine 91, arginine 102, and asparagine 112. The active-site Pros-phosphohistidine intermediate is histidine 115.

This sequence belongs to the NDK family. In terms of assembly, homotetramer. Mg(2+) is required as a cofactor.

It is found in the cytoplasm. It catalyses the reaction a 2'-deoxyribonucleoside 5'-diphosphate + ATP = a 2'-deoxyribonucleoside 5'-triphosphate + ADP. The catalysed reaction is a ribonucleoside 5'-diphosphate + ATP = a ribonucleoside 5'-triphosphate + ADP. In terms of biological role, major role in the synthesis of nucleoside triphosphates other than ATP. The ATP gamma phosphate is transferred to the NDP beta phosphate via a ping-pong mechanism, using a phosphorylated active-site intermediate. This Desulfotalea psychrophila (strain LSv54 / DSM 12343) protein is Nucleoside diphosphate kinase.